The primary structure comprises 104 residues: Large ribosomal subunit protein bL28 (104 aa).

This sequence belongs to the bacterial ribosomal protein bL28 family.

In Wolbachia pipientis wMel, this protein is Large ribosomal subunit protein bL28.